Here is a 329-residue protein sequence, read N- to C-terminus: Large ribosomal subunit protein uL3 (329 aa).

The protein belongs to the universal ribosomal protein uL3 family. Part of the 50S ribosomal subunit. Forms a cluster with proteins L14 and L24e.

Its function is as follows. One of the primary rRNA binding proteins, it binds directly near the 3'-end of the 23S rRNA, where it nucleates assembly of the 50S subunit. The chain is Large ribosomal subunit protein uL3 from Picrophilus torridus (strain ATCC 700027 / DSM 9790 / JCM 10055 / NBRC 100828 / KAW 2/3).